Reading from the N-terminus, the 278-residue chain is Putative transposase for insertion sequence element IS986/IS6110 (278 aa).

One can recognise an Integrase catalytic domain in the interval 101–268 (GPPAPNRLWV…VPPVELEAAY (168 aa)).

In terms of biological role, involved in the transposition of the insertion sequence. The chain is Putative transposase for insertion sequence element IS986/IS6110 from Mycobacterium bovis (strain ATCC BAA-935 / AF2122/97).